The chain runs to 121 residues: Small ribosomal subunit protein uS13 (121 aa).

Positions 91–121 are disordered; it reads HRRGLPVRGQKTKNNARTRKGPVKTVANKKK.

It belongs to the universal ribosomal protein uS13 family. In terms of assembly, part of the 30S ribosomal subunit. Forms a loose heterodimer with protein S19. Forms two bridges to the 50S subunit in the 70S ribosome.

Its function is as follows. Located at the top of the head of the 30S subunit, it contacts several helices of the 16S rRNA. In the 70S ribosome it contacts the 23S rRNA (bridge B1a) and protein L5 of the 50S subunit (bridge B1b), connecting the 2 subunits; these bridges are implicated in subunit movement. Contacts the tRNAs in the A and P-sites. This is Small ribosomal subunit protein uS13 from Staphylococcus epidermidis (strain ATCC 35984 / DSM 28319 / BCRC 17069 / CCUG 31568 / BM 3577 / RP62A).